The primary structure comprises 339 residues: Ketol-acid reductoisomerase (NADP(+)) (339 aa).

The 182-residue stretch at 1–182 (MRVYYDRDAD…GGGRAGIIET (182 aa)) folds into the KARI N-terminal Rossmann domain. Residues 24 to 27 (YGSQ), Arg48, Ser51, Ser53, and 83 to 86 (DELQ) contribute to the NADP(+) site. The active site involves His108. Residue Gly134 coordinates NADP(+). The KARI C-terminal knotted domain occupies 183-328 (TFKEECETDL…ARLRDMMPWI (146 aa)). Residues Asp191, Glu195, Glu227, and Glu231 each contribute to the Mg(2+) site. Residue Ser252 participates in substrate binding.

This sequence belongs to the ketol-acid reductoisomerase family. Mg(2+) serves as cofactor.

The catalysed reaction is (2R)-2,3-dihydroxy-3-methylbutanoate + NADP(+) = (2S)-2-acetolactate + NADPH + H(+). It carries out the reaction (2R,3R)-2,3-dihydroxy-3-methylpentanoate + NADP(+) = (S)-2-ethyl-2-hydroxy-3-oxobutanoate + NADPH + H(+). It participates in amino-acid biosynthesis; L-isoleucine biosynthesis; L-isoleucine from 2-oxobutanoate: step 2/4. The protein operates within amino-acid biosynthesis; L-valine biosynthesis; L-valine from pyruvate: step 2/4. In terms of biological role, involved in the biosynthesis of branched-chain amino acids (BCAA). Catalyzes an alkyl-migration followed by a ketol-acid reduction of (S)-2-acetolactate (S2AL) to yield (R)-2,3-dihydroxy-isovalerate. In the isomerase reaction, S2AL is rearranged via a Mg-dependent methyl migration to produce 3-hydroxy-3-methyl-2-ketobutyrate (HMKB). In the reductase reaction, this 2-ketoacid undergoes a metal-dependent reduction by NADPH to yield (R)-2,3-dihydroxy-isovalerate. This Bradyrhizobium sp. (strain ORS 278) protein is Ketol-acid reductoisomerase (NADP(+)).